We begin with the raw amino-acid sequence, 212 residues long: Putative inactive 6-phospho-alpha-glucosidase (212 aa).

NAD(+) is bound at residue Phe-4–Asp-70. The Mn(2+) site is built by Cys-169 and His-200.

Belongs to the glycosyl hydrolase 4 family.

The protein is Putative inactive 6-phospho-alpha-glucosidase of Escherichia coli (strain K12).